The following is a 573-amino-acid chain: DNA ligase (573 aa).

Position 250 (glutamate 250) interacts with ATP. The active-site N6-AMP-lysine intermediate is the lysine 252. ATP-binding residues include arginine 257, arginine 272, glutamate 301, phenylalanine 342, arginine 432, and lysine 438.

Belongs to the ATP-dependent DNA ligase family. Mg(2+) serves as cofactor.

It carries out the reaction ATP + (deoxyribonucleotide)n-3'-hydroxyl + 5'-phospho-(deoxyribonucleotide)m = (deoxyribonucleotide)n+m + AMP + diphosphate.. Functionally, DNA ligase that seals nicks in double-stranded DNA during DNA replication, DNA recombination and DNA repair. In Methanococcus maripaludis (strain DSM 14266 / JCM 13030 / NBRC 101832 / S2 / LL), this protein is DNA ligase.